We begin with the raw amino-acid sequence, 117 residues long: Large ribosomal subunit protein uL18 (117 aa).

Residues 1-17 show a composition bias toward basic residues; that stretch reads MNLSRNKARKVKQKRLR. Positions 1-23 are disordered; it reads MNLSRNKARKVKQKRLRAKSELS.

Belongs to the universal ribosomal protein uL18 family. In terms of assembly, part of the 50S ribosomal subunit; part of the 5S rRNA/L5/L18/L25 subcomplex. Contacts the 5S and 23S rRNAs.

This is one of the proteins that bind and probably mediate the attachment of the 5S RNA into the large ribosomal subunit, where it forms part of the central protuberance. This is Large ribosomal subunit protein uL18 from Mycoplasmopsis synoviae (strain 53) (Mycoplasma synoviae).